An 818-amino-acid chain; its full sequence is Adhesion G protein-coupled receptor E5 (818 aa).

An N-terminal signal peptide occupies residues 1–23; it reads MRGVRCPGLLVVCILLSLSGAGT. Residues 24-533 are Extracellular-facing; sequence QKAESKNCAK…VQDPRLELIT (510 aa). Residues 27–68 enclose the EGF-like 1 domain; that stretch reads ESKNCAKWCPINSKCVSNRSCVCKPGFSSEKELITNPAESCE. Cystine bridges form between cysteine 31–cysteine 41, cysteine 35–cysteine 47, cysteine 49–cysteine 67, cysteine 73–cysteine 86, cysteine 80–cysteine 95, cysteine 97–cysteine 118, cysteine 169–cysteine 182, cysteine 176–cysteine 191, cysteine 193–cysteine 212, cysteine 218–cysteine 231, cysteine 225–cysteine 240, and cysteine 242–cysteine 260. Asparagine 44 carries an N-linked (GlcNAc...) asparagine glycan. One can recognise an EGF-like 2; calcium-binding domain in the interval 69–119; that stretch reads DINECLLPGFSCGDFAMCKNSEGSYTCVCNLGYKLLSGAESFVNESENTCQ. A glycan (N-linked (GlcNAc...) asparagine) is linked at asparagine 112. Residues 165 to 213 form the EGF-like 3; calcium-binding domain; sequence DVNECISGQNHCHQSTHCINKLGGYSCICRQGWKPVPGSPNGPVSTVCE. The 48-residue stretch at 214 to 261 folds into the EGF-like 4; calcium-binding domain; sequence DVDECSSGQHQCHNSTVCKNTVGSYKCHCRPGWKPTSGSLRGPDTICQ. N-linked (GlcNAc...) asparagine glycosylation occurs at asparagine 227. Asparagine 299 and asparagine 395 each carry an N-linked (GlcNAc...) asparagine glycan. A GAIN-B domain is found at 347–525; it reads PFTYTSPSNT…AILMAQYHVQ (179 aa). At serine 425 the chain carries Phosphoserine. Asparagine 461 and asparagine 502 each carry an N-linked (GlcNAc...) asparagine glycan. Intrachain disulfides connect cysteine 482/cysteine 507 and cysteine 499/cysteine 509. A GPS region spans residues 482-525; sequence CAFWKAHNGNGYWDTDGCSMNGTGFCHCNHLTSFAILMAQYHVQ. Residues 534-554 traverse the membrane as a helical segment; it reads KVGLLLSLICLLLCILTFLLV. At 555-562 the chain is on the cytoplasmic side; the sequence is KPIQSSRT. A helical transmembrane segment spans residues 563–583; that stretch reads MVHLHLCICLFLGSIIFLVGV. At 584-602 the chain is on the extracellular side; that stretch reads ENEGGEVGLRCRLVAMMLH. Residues 603 to 623 traverse the membrane as a helical segment; sequence FCFLAAFCWMALEGVELYFLV. At 624–637 the chain is on the cytoplasmic side; it reads VRVFQGQGLSTWQR. Residues 638–658 form a helical membrane-spanning segment; it reads CLIGYGVPLLIVAISMAVVKM. Over 659-679 the chain is Extracellular; it reads DGYGHATYCWLDFRKQGFLWS. Residues 680 to 700 traverse the membrane as a helical segment; the sequence is FSGPVAFIIFCNAAIFVITVW. The Cytoplasmic portion of the chain corresponds to 701-723; that stretch reads KLTKKFSEINPNMKKLRKARVLT. The helical transmembrane segment at 724-744 threads the bilayer; sequence ITAIAQLLVLGCTWGFGLFLF. Topologically, residues 745 to 752 are extracellular; the sequence is NPHSTWLS. The helical transmembrane segment at 753 to 773 threads the bilayer; it reads YIFTLLNCLQGLFLYVMLCLL. Residues 774 to 818 lie on the Cytoplasmic side of the membrane; the sequence is NKKVREEYWKWACMVTGSKYTEFNSSTTGTGTSQTRALRSSESGM. Serine 798 is modified (phosphoserine). Residues 799–808 show a composition bias toward low complexity; the sequence is STTGTGTSQT. A disordered region spans residues 799–818; sequence STTGTGTSQTRALRSSESGM. Threonine 808 carries the phosphothreonine modification. Residues 809–818 are compositionally biased toward polar residues; sequence RALRSSESGM. A phosphoserine mark is found at serine 814 and serine 816.

This sequence belongs to the G-protein coupled receptor 2 family. LN-TM7 subfamily. As to quaternary structure, forms a heterodimer, consisting of a large extracellular region (alpha subunit) non-covalently linked to a seven-transmembrane moiety (beta subunit). Interacts with complement decay-accelerating factor (DAF). The largest isoform (isoform 1) do not interact with DAF. Also interacts with chondroitin sulfate. In terms of processing, proteolytically cleaved into 2 subunits, an extracellular alpha subunit and a seven-transmembrane subunit. In terms of tissue distribution, although predominantly expressed by cells of the immune system, expressed ubiquitously with particularly high levels of expression in the lung and the thymus gland. In the spleen, expression is detected on most myeloid cells and variable portions of T-cells, B-cells and NK cells. In the bone marrow, expressed in nearly all myeloid cells, whereas little if any expression is found on erythroid cells.

Its subcellular location is the cell membrane. It is found in the secreted. It localises to the extracellular space. Receptor potentially involved in both adhesion and signaling processes early after leukocyte activation. Plays an essential role in leukocyte migration. The sequence is that of Adhesion G protein-coupled receptor E5 from Mus musculus (Mouse).